The primary structure comprises 397 residues: UPF0761 membrane protein Kkor_1635 (397 aa).

The next 6 membrane-spanning stretches (helical) occupy residues 36 to 56, 92 to 112, 132 to 152, 168 to 188, 201 to 221, and 237 to 257; these read MLAL…FPSF, NLSA…MRSI, ILAY…SLAA, ILTF…LYMV, IAAV…AIFV, and IPIF…GVIV.

The protein belongs to the UPF0761 family.

The protein resides in the cell inner membrane. The polypeptide is UPF0761 membrane protein Kkor_1635 (Kangiella koreensis (strain DSM 16069 / JCM 12317 / KCTC 12182 / SW-125)).